We begin with the raw amino-acid sequence, 355 residues long: DNA polymerase IV (355 aa).

Residues 6 to 187 form the UmuC domain; that stretch reads IIHVDMDAFY…LPVGKIHGVG (182 aa). 2 residues coordinate Mg(2+): aspartate 10 and aspartate 105. Glutamate 106 is an active-site residue.

The protein belongs to the DNA polymerase type-Y family. In terms of assembly, monomer. Requires Mg(2+) as cofactor.

The protein localises to the cytoplasm. The catalysed reaction is DNA(n) + a 2'-deoxyribonucleoside 5'-triphosphate = DNA(n+1) + diphosphate. In terms of biological role, poorly processive, error-prone DNA polymerase involved in untargeted mutagenesis. Copies undamaged DNA at stalled replication forks, which arise in vivo from mismatched or misaligned primer ends. These misaligned primers can be extended by PolIV. Exhibits no 3'-5' exonuclease (proofreading) activity. May be involved in translesional synthesis, in conjunction with the beta clamp from PolIII. The polypeptide is DNA polymerase IV (Alkalilimnicola ehrlichii (strain ATCC BAA-1101 / DSM 17681 / MLHE-1)).